A 230-amino-acid chain; its full sequence is Leucyl/phenylalanyl-tRNA--protein transferase (230 aa).

Belongs to the L/F-transferase family.

The protein localises to the cytoplasm. It catalyses the reaction N-terminal L-lysyl-[protein] + L-leucyl-tRNA(Leu) = N-terminal L-leucyl-L-lysyl-[protein] + tRNA(Leu) + H(+). It carries out the reaction N-terminal L-arginyl-[protein] + L-leucyl-tRNA(Leu) = N-terminal L-leucyl-L-arginyl-[protein] + tRNA(Leu) + H(+). The catalysed reaction is L-phenylalanyl-tRNA(Phe) + an N-terminal L-alpha-aminoacyl-[protein] = an N-terminal L-phenylalanyl-L-alpha-aminoacyl-[protein] + tRNA(Phe). Functions in the N-end rule pathway of protein degradation where it conjugates Leu, Phe and, less efficiently, Met from aminoacyl-tRNAs to the N-termini of proteins containing an N-terminal arginine or lysine. The protein is Leucyl/phenylalanyl-tRNA--protein transferase of Proteus mirabilis (strain HI4320).